A 430-amino-acid chain; its full sequence is Isocitrate dehydrogenase [NADP], mitochondrial (430 aa).

Residues 1–27 (MIRASAIQRTAMLLRQLRGFSTSATLA) constitute a mitochondrion transit peptide. NADP(+)-binding positions include 101-103 (TIT) and Arg108. Thr103 is a substrate binding site. Residues 120 to 126 (SPNGTIR), Arg135, and Arg158 contribute to the substrate site. Asp277 lines the Mn(2+) pocket. Residue Lys285 participates in NADP(+) binding. Asp300 is a binding site for Mn(2+). Residues 335-340 (GTVTRH) and Asn353 contribute to the NADP(+) site.

The protein belongs to the isocitrate and isopropylmalate dehydrogenases family. In terms of assembly, homodimer. It depends on Mg(2+) as a cofactor. Mn(2+) serves as cofactor.

It is found in the mitochondrion. It carries out the reaction D-threo-isocitrate + NADP(+) = 2-oxoglutarate + CO2 + NADPH. Functionally, mitochondrial IDP1 may regulate flux through the tricarboxylic acid cycle and respiration. Its probably critical function is the production of NADPH. The sequence is that of Isocitrate dehydrogenase [NADP], mitochondrial (IDP1) from Candida tropicalis (Yeast).